A 731-amino-acid chain; its full sequence is Polyadenylate-binding protein, cytoplasmic and nuclear (731 aa).

Residues 1–10 (MSADVSTTPA) are compositionally biased toward polar residues. The disordered stretch occupies residues 1 to 51 (MSADVSTTPAAENVNGAAEASPAPAAAAPSATTPEVTAVENSTPAPAANQP). Residues 17–39 (AAEASPAPAAAAPSATTPEVTAV) are compositionally biased toward low complexity. 4 RRM domains span residues 54-132 (ASLY…WSQR), 142-219 (GNVF…HHIS), 235-312 (TNVY…RAQK), and 338-472 (VNLY…LAQR). Disordered stretches follow at residues 369-429 (VMRD…SDKK) and 603-665 (GGRG…NAQT). The segment covering 616-627 (GMRGGPGYGQGR) has biased composition (gly residues). Low complexity predominate over residues 645-656 (QNAAAPAGPQEG). The PABC domain maps to 658–731 (AGGVNAQTLG…MRPLAFTMST (74 aa)).

The protein belongs to the polyadenylate-binding protein type-1 family.

Its subcellular location is the cytoplasm. The protein localises to the nucleus. Binds the poly(A) tail of mRNA. Appears to be an important mediator of the multiple roles of the poly(A) tail in mRNA biogenesis, stability and translation. In the nucleus, involved in both mRNA cleavage and polyadenylation. Is also required for efficient mRNA export to the cytoplasm. Acts in concert with a poly(A)-specific nuclease (PAN) to affect poly(A) tail shortening, which may occur concomitantly with either nucleocytoplasmic mRNA transport or translational initiation. In the cytoplasm, stimulates translation initiation and regulates mRNA decay through translation termination-coupled poly(A) shortening, probably mediated by PAN. This Aspergillus niger (strain ATCC MYA-4892 / CBS 513.88 / FGSC A1513) protein is Polyadenylate-binding protein, cytoplasmic and nuclear (pab1).